The sequence spans 258 residues: MSSLLSKTRRLNKILQKTGTEPVAFQDICTLLSEVLECNAYIVSKRGKVLGYTFSPGFECEAMKKKVIEDKKFPEDYNLTLLESNETLANLSNQGRCVFAEIGDCKTKDKISTIIPIIGSRERLGTLILARFGKEFTDDDLVLVEYSATIVGMEMLRALQEDLADQTRKKAVVQLAIGTLSYSELEAVEHIFEELNGNEGLLVASKIADKVGITRSVIVNALRKFESAGVIESRSLGMKGTYIRVLNEKLLDELKKIK.

A GAF domain region spans residues 1–156; that stretch reads MSSLLSKTRR…SATIVGMEML (156 aa). The segment at residues 204 to 223 is a DNA-binding region (H-T-H motif); the sequence is ASKIADKVGITRSVIVNALR.

Belongs to the CodY family.

The protein resides in the cytoplasm. Functionally, DNA-binding global transcriptional regulator which is involved in the adaptive response to starvation and acts by directly or indirectly controlling the expression of numerous genes in response to nutrient availability. During rapid exponential growth, CodY is highly active and represses genes whose products allow adaptation to nutrient depletion. This chain is Global transcriptional regulator CodY, found in Clostridium botulinum (strain Alaska E43 / Type E3).